We begin with the raw amino-acid sequence, 620 residues long: Two-component response regulator ORR27 (620 aa).

Positions 24 to 138 constitute a Response regulatory domain; the sequence is HVLVVDDDAA…AIKFIWKHVL (115 aa). Aspartate 76 carries the 4-aspartylphosphate modification. Disordered regions lie at residues 171 to 197 and 215 to 257; these read PPAV…AELS and VWSS…LEAT. The myb-like GARP DNA-binding region spans 261–321; that stretch reads KKVRTRFTWT…HLQKYRSWLE (61 aa). A compositionally biased stretch (polar residues) spans 431 to 456; the sequence is SVSRDAHENGNSQARGSAMSNGTSGT. 3 disordered regions span residues 431–457, 501–523, and 596–620; these read SVSR…SGTR, SDQN…NSKT, and PPRG…SSGP. Positions 603 to 620 are enriched in polar residues; that stretch reads EIASHENTNGKNGASSGP.

It belongs to the ARR family. Type-B subfamily. Two-component system major event consists of a His-to-Asp phosphorelay between a sensor histidine kinase (HK) and a response regulator (RR). In plants, the His-to-Asp phosphorelay involves an additional intermediate named Histidine-containing phosphotransfer protein (HPt). This multistep phosphorelay consists of a His-Asp-His-Asp sequential transfer of a phosphate group between first a His and an Asp of the HK protein, followed by the transfer to a conserved His of the HPt protein and finally the transfer to an Asp in the receiver domain of the RR protein.

It is found in the nucleus. Its function is as follows. Transcriptional activator that binds specific DNA sequence. Functions as a response regulator involved in His-to-Asp phosphorelay signal transduction system. Phosphorylation of the Asp residue in the receiver domain activates the ability of the protein to promote the transcription of target genes. May directly activate some type-A response regulators in response to cytokinins. The protein is Two-component response regulator ORR27 of Oryza sativa subsp. japonica (Rice).